A 937-amino-acid polypeptide reads, in one-letter code: Aconitate hydratase A (937 aa).

[4Fe-4S] cluster-binding residues include Cys439, Cys505, and Cys508. The segment at 898-921 (KKESKSTQSTTSKGCGSADTSSET) is disordered.

The protein belongs to the aconitase/IPM isomerase family. As to quaternary structure, monomer. [4Fe-4S] cluster serves as cofactor.

It catalyses the reaction citrate = D-threo-isocitrate. The catalysed reaction is (2S,3R)-3-hydroxybutane-1,2,3-tricarboxylate = 2-methyl-cis-aconitate + H2O. It participates in carbohydrate metabolism; tricarboxylic acid cycle; isocitrate from oxaloacetate: step 2/2. It functions in the pathway organic acid metabolism; propanoate degradation. Functionally, involved in the catabolism of short chain fatty acids (SCFA) via the tricarboxylic acid (TCA)(acetyl degradation route) and probably the 2-methylcitrate cycle I (propionate degradation route). Catalyzes the reversible isomerization of citrate to isocitrate via cis-aconitate. Could catalyze the hydration of 2-methyl-cis-aconitate to yield (2R,3S)-2-methylisocitrate. The apo form of AcnA functions as a RNA-binding regulatory protein. This chain is Aconitate hydratase A (acn), found in Francisella tularensis subsp. holarctica (strain LVS).